The chain runs to 88 residues: Large ribosomal subunit protein bL27 (88 aa).

The tract at residues 1-21 is disordered; the sequence is MAHKKGASSSRNGRDSNAKRL.

The protein belongs to the bacterial ribosomal protein bL27 family.

This Thermobifida fusca (strain YX) protein is Large ribosomal subunit protein bL27.